The primary structure comprises 134 residues: uncharacterized protein (134 aa).

It belongs to the orthopoxviruses B21 protein family.

This is an uncharacterized protein from Bos taurus (Bovine).